Reading from the N-terminus, the 257-residue chain is Acetylglutamate kinase (257 aa).

Substrate-binding positions include Gly-40–Gly-41, Arg-62, and Asn-155.

The protein belongs to the acetylglutamate kinase family. ArgB subfamily.

It is found in the cytoplasm. The enzyme catalyses N-acetyl-L-glutamate + ATP = N-acetyl-L-glutamyl 5-phosphate + ADP. It participates in amino-acid biosynthesis; L-arginine biosynthesis; N(2)-acetyl-L-ornithine from L-glutamate: step 2/4. Functionally, catalyzes the ATP-dependent phosphorylation of N-acetyl-L-glutamate. The protein is Acetylglutamate kinase of Shouchella clausii (strain KSM-K16) (Alkalihalobacillus clausii).